We begin with the raw amino-acid sequence, 160 residues long: SsrA-binding protein (160 aa).

A disordered region spans residues 131–160; that stretch reads KKEYDKRHTERERDSDRELQRAVRSKGKDD.

It belongs to the SmpB family.

The protein resides in the cytoplasm. Required for rescue of stalled ribosomes mediated by trans-translation. Binds to transfer-messenger RNA (tmRNA), required for stable association of tmRNA with ribosomes. tmRNA and SmpB together mimic tRNA shape, replacing the anticodon stem-loop with SmpB. tmRNA is encoded by the ssrA gene; the 2 termini fold to resemble tRNA(Ala) and it encodes a 'tag peptide', a short internal open reading frame. During trans-translation Ala-aminoacylated tmRNA acts like a tRNA, entering the A-site of stalled ribosomes, displacing the stalled mRNA. The ribosome then switches to translate the ORF on the tmRNA; the nascent peptide is terminated with the 'tag peptide' encoded by the tmRNA and targeted for degradation. The ribosome is freed to recommence translation, which seems to be the essential function of trans-translation. The polypeptide is SsrA-binding protein (Pseudomonas syringae pv. syringae (strain B728a)).